We begin with the raw amino-acid sequence, 939 residues long: Isoleucine--tRNA ligase (939 aa).

The 'HIGH' region motif lies at 57–67 (PYANGHIHIGH). Position 563 (Glu-563) interacts with L-isoleucyl-5'-AMP. Positions 604–608 (KMSKS) match the 'KMSKS' region motif. Lys-607 lines the ATP pocket. Residues Cys-903, Cys-906, Cys-921, and Cys-924 each contribute to the Zn(2+) site.

This sequence belongs to the class-I aminoacyl-tRNA synthetase family. IleS type 1 subfamily. As to quaternary structure, monomer. Zn(2+) serves as cofactor.

It is found in the cytoplasm. It catalyses the reaction tRNA(Ile) + L-isoleucine + ATP = L-isoleucyl-tRNA(Ile) + AMP + diphosphate. Its function is as follows. Catalyzes the attachment of isoleucine to tRNA(Ile). As IleRS can inadvertently accommodate and process structurally similar amino acids such as valine, to avoid such errors it has two additional distinct tRNA(Ile)-dependent editing activities. One activity is designated as 'pretransfer' editing and involves the hydrolysis of activated Val-AMP. The other activity is designated 'posttransfer' editing and involves deacylation of mischarged Val-tRNA(Ile). The sequence is that of Isoleucine--tRNA ligase from Sulfurihydrogenibium sp. (strain YO3AOP1).